The following is a 181-amino-acid chain: Ribosome maturation factor RimM (181 aa).

Residues 97-170 enclose the PRC barrel domain; sequence AGEFWLPDLM…RIEVVAIPGL (74 aa).

Belongs to the RimM family. Binds ribosomal protein uS19.

The protein resides in the cytoplasm. In terms of biological role, an accessory protein needed during the final step in the assembly of 30S ribosomal subunit, possibly for assembly of the head region. Essential for efficient processing of 16S rRNA. May be needed both before and after RbfA during the maturation of 16S rRNA. It has affinity for free ribosomal 30S subunits but not for 70S ribosomes. This chain is Ribosome maturation factor RimM, found in Gloeobacter violaceus (strain ATCC 29082 / PCC 7421).